The chain runs to 1556 residues: uncharacterized protein (1556 aa).

An N-acetylserine modification is found at S2. Positions 145–156 (NQLENRKSLERK) are enriched in basic and acidic residues. Residues 145 to 170 (NQLENRKSLERKPSRKRRKKNSNVND) are disordered. The region spanning 378-583 (SGDYPVCAKG…MIMSYLKLHP (206 aa)) is the Helicase ATP-binding domain. 391 to 398 (EEMGLGKT) serves as a coordination point for ATP. S810 carries the post-translational modification Phosphoserine. The interval 810–850 (SEDEDEHMDERFGEKETSSGDESDREINGAKNHDNHNNDGM) is disordered. 2 stretches are compositionally biased toward basic and acidic residues: residues 817 to 827 (MDERFGEKETS) and 834 to 846 (REINGAKNHDNHN). Residues 1239-1277 (CSICLGEVEIGAIIKCGHYFCKSCILTWLRAHSKCPICK) form an RING-type zinc finger. A compositionally biased stretch (basic and acidic residues) spans 1297–1309 (REKEIQEPRREGA). 2 disordered regions span residues 1297–1319 (REKEIQEPRREGADSSQDNSNEN) and 1508–1534 (EKSKKGDKYDEAQDETDNEESDDAKFE). The segment covering 1310–1319 (DSSQDNSNEN) has biased composition (low complexity). One can recognise a Helicase C-terminal domain in the interval 1363 to 1531 (KLISYLRLKS…ETDNEESDDA (169 aa)). The span at 1508–1518 (EKSKKGDKYDE) shows a compositional bias: basic and acidic residues. Residues 1519–1529 (AQDETDNEESD) show a composition bias toward acidic residues.

This sequence belongs to the SNF2/RAD54 helicase family.

It is found in the nucleus. Its function is as follows. Is probably involved in a pathway contributing to genomic integrity. This is an uncharacterized protein from Saccharomyces cerevisiae (strain ATCC 204508 / S288c) (Baker's yeast).